The chain runs to 238 residues: Aspartate/glutamate leucyltransferase (238 aa).

It belongs to the R-transferase family. Bpt subfamily.

It localises to the cytoplasm. The catalysed reaction is N-terminal L-glutamyl-[protein] + L-leucyl-tRNA(Leu) = N-terminal L-leucyl-L-glutamyl-[protein] + tRNA(Leu) + H(+). The enzyme catalyses N-terminal L-aspartyl-[protein] + L-leucyl-tRNA(Leu) = N-terminal L-leucyl-L-aspartyl-[protein] + tRNA(Leu) + H(+). Functionally, functions in the N-end rule pathway of protein degradation where it conjugates Leu from its aminoacyl-tRNA to the N-termini of proteins containing an N-terminal aspartate or glutamate. The protein is Aspartate/glutamate leucyltransferase of Aeromonas salmonicida (strain A449).